The following is a 347-amino-acid chain: Heat-inducible transcription repressor HrcA (347 aa).

This sequence belongs to the HrcA family.

Negative regulator of class I heat shock genes (grpE-dnaK-dnaJ and groELS operons). Prevents heat-shock induction of these operons. The chain is Heat-inducible transcription repressor HrcA from Rhodococcus jostii (strain RHA1).